The following is a 128-amino-acid chain: Ribosome-binding factor A (128 aa).

This sequence belongs to the RbfA family. Monomer. Binds 30S ribosomal subunits, but not 50S ribosomal subunits or 70S ribosomes.

Its subcellular location is the cytoplasm. Functionally, one of several proteins that assist in the late maturation steps of the functional core of the 30S ribosomal subunit. Associates with free 30S ribosomal subunits (but not with 30S subunits that are part of 70S ribosomes or polysomes). Required for efficient processing of 16S rRNA. May interact with the 5'-terminal helix region of 16S rRNA. The protein is Ribosome-binding factor A of Haemophilus influenzae (strain ATCC 51907 / DSM 11121 / KW20 / Rd).